A 132-amino-acid polypeptide reads, in one-letter code: uncharacterized protein (132 aa).

It to M.jannaschii MJ0661.

This is an uncharacterized protein from Helicobacter pylori (strain ATCC 700392 / 26695) (Campylobacter pylori).